The following is a 464-amino-acid chain: ATP synthase subunit beta (464 aa).

Residue G148 to T155 coordinates ATP.

The protein belongs to the ATPase alpha/beta chains family. F-type ATPases have 2 components, CF(1) - the catalytic core - and CF(0) - the membrane proton channel. CF(1) has five subunits: alpha(3), beta(3), gamma(1), delta(1), epsilon(1). CF(0) has three main subunits: a(1), b(2) and c(9-12). The alpha and beta chains form an alternating ring which encloses part of the gamma chain. CF(1) is attached to CF(0) by a central stalk formed by the gamma and epsilon chains, while a peripheral stalk is formed by the delta and b chains.

It localises to the cell inner membrane. The enzyme catalyses ATP + H2O + 4 H(+)(in) = ADP + phosphate + 5 H(+)(out). In terms of biological role, produces ATP from ADP in the presence of a proton gradient across the membrane. The catalytic sites are hosted primarily by the beta subunits. The protein is ATP synthase subunit beta of Acinetobacter baumannii (strain AB0057).